Here is a 2285-residue protein sequence, read N- to C-terminus: Protein Ycf2 (2285 aa).

1638-1645 provides a ligand contact to ATP; the sequence is GSIGTGRS.

It belongs to the Ycf2 family.

The protein resides in the plastid. The protein localises to the chloroplast stroma. Functionally, probable ATPase of unknown function. Its presence in a non-photosynthetic plant (Epifagus virginiana) and experiments in tobacco indicate that it has an essential function which is probably not related to photosynthesis. This Populus trichocarpa (Western balsam poplar) protein is Protein Ycf2.